The chain runs to 388 residues: AT-rich binding protein (388 aa).

Residues 29–52 form a C2H2-type 1 zinc finger; it reads IVCHTCQEELQTQDQFWKHIQDEH. Composition is skewed to low complexity over residues 138-165 and 249-265; these read QQHQ…LQQQ and VSVS…STTP. 2 disordered regions span residues 138 to 168 and 240 to 265; these read QQHQ…QRDV and PPPP…STTP. 2 C2H2-type zinc fingers span residues 321–345 and 351–374; these read YVCD…RVVH and FNCE…KKKH.

Its subcellular location is the nucleus. Its function is as follows. May be a transcription factor for genes having (A+T) stretches in their promoter and/or enhancer regions. Binds to AT rich DNA. The protein is AT-rich binding protein of Drosophila melanogaster (Fruit fly).